The following is a 425-amino-acid chain: 26S proteasome regulatory subunit 7 (425 aa).

208–215 (GPPGTGKT) provides a ligand contact to ATP.

This sequence belongs to the AAA ATPase family.

It localises to the cytoplasm. It is found in the nucleus. In terms of biological role, the 26S proteasome is involved in the ATP-dependent degradation of ubiquitinated proteins. The regulatory (or ATPase) complex confers ATP dependency and substrate specificity to the 26S complex. The protein is 26S proteasome regulatory subunit 7 (RPT1) of Prunus persica (Peach).